The following is a 350-amino-acid chain: Phosphotriesterase-related protein (350 aa).

A divalent metal cation-binding residues include H22, H24, E169, H201, H230, and D298.

The protein belongs to the metallo-dependent hydrolases superfamily. Phosphotriesterase family. A divalent metal cation is required as a cofactor.

The polypeptide is Phosphotriesterase-related protein (Drosophila melanogaster (Fruit fly)).